The following is a 393-amino-acid chain: Phosphatidate cytidylyltransferase (393 aa).

8 consecutive transmembrane segments (helical) span residues 49–69 (NFFRRLVLSIVMISGFCWISV), 73–93 (IYSFGLIIFLTISIIREIIGI), 108–128 (IILGLAVPIYSYLVFPSIMMM), 141–161 (LSFVCFYSYVAAFMCFVASLR), 171–191 (LFALIHLSTYTMAIAAKCAIF), 198–218 (FWFVFPALLVISNDISAYVVG), 237–257 (GFIGAFIFTTAVGFALGHLHV), and 290–310 (IHIIPFIFVASFVAPFSGFLA).

It belongs to the CDS family.

The protein resides in the membrane. The catalysed reaction is a 1,2-diacyl-sn-glycero-3-phosphate + CTP + H(+) = a CDP-1,2-diacyl-sn-glycerol + diphosphate. The protein operates within phospholipid metabolism; CDP-diacylglycerol biosynthesis; CDP-diacylglycerol from sn-glycerol 3-phosphate: step 3/3. In Encephalitozoon cuniculi (strain GB-M1) (Microsporidian parasite), this protein is Phosphatidate cytidylyltransferase (CDS1).